The following is a 211-amino-acid chain: Metalloproteinase inhibitor 3 (211 aa).

Residues 1–23 form the signal peptide; it reads MTPWLGLVVLLSCWSLGHWGAEA. Cysteine 24 contributes to the Zn(2+) binding site. Involved in metalloproteinase-binding stretches follow at residues 24–27 and 88–89; these read CTCS and ES. 6 cysteine pairs are disulfide-bonded: cysteine 24–cysteine 91, cysteine 26–cysteine 118, cysteine 36–cysteine 143, cysteine 145–cysteine 192, cysteine 150–cysteine 155, and cysteine 163–cysteine 184. Positions 24-143 constitute an NTR domain; the sequence is CTCSPSHPQD…GLNYRYHLGC (120 aa). The interval 105-188 is mediates interaction with EFEMP1; it reads TGRVYEGKMY…SKHYACIRQK (84 aa).

Belongs to the protease inhibitor I35 (TIMP) family. As to quaternary structure, interacts with EFEMP1. Interacts with KDR. As to expression, highest levels are found in kidney, lung and brain followed by ovary and uterus. Low levels are found in bone.

The protein localises to the secreted. It is found in the extracellular space. Its subcellular location is the extracellular matrix. In terms of biological role, mediates a variety of processes including matrix regulation and turnover, inflammation, and angiogenesis, through reversible inhibition of zinc protease superfamily enzymes, primarily matrix metalloproteinases (MMPs). Regulates extracellular matrix (ECM) remodeling through inhibition of matrix metalloproteinases (MMP) including MMP-1, MMP-2, MMP-3, MMP-7, MMP-9, MMP-13, MMP-14 and MMP-15. Additionally, modulates the processing of amyloid precursor protein (APP) and apolipoprotein E receptor ApoER2 by inhibiting two alpha-secretases ADAM10 and ADAM17. Functions as a tumor suppressor and a potent inhibitor of angiogenesis. Exerts its anti-angiogenic effect by directly interacting with vascular endothelial growth factor (VEGF) receptor-2/KDR, preventing its binding to the VEGFA ligand. Selectively induces apoptosis in angiogenic endothelial cells through a caspase-independent cell death pathway. Mechanistically, inhibits matrix-induced focal adhesion kinase PTK2 tyrosine phosphorylation and association with paxillin/PXN and disrupts the incorporation of ITGB3, PTK2 and PXN into focal adhesion contacts on the matrix. This chain is Metalloproteinase inhibitor 3 (Timp3), found in Mus musculus (Mouse).